A 129-amino-acid chain; its full sequence is DNA base-flipping protein (129 aa).

It belongs to the MGMT family. ATL subfamily. Interacts with HelD and UvrA.

Its function is as follows. Involved in DNA damage recognition. Binds DNA containing O(6)-methylguanine and larger O(6)-alkylguanine adducts, and to double-stranded DNA that contains an AP (apurinic/apyrimidinic) site. Binds to the damaged base and flips the base out of the DNA duplex into an extrahelical conformation, which allows processing by repair proteins. Works in partnership with the nucleotide excision repair (NER) pathway to enhance the repair of the O(6)-alkylguanine adducts larger than the methyl adduct. Also prevents methyl-directed mismatch repair (MMR)-mediated attack of the O(6)-alkylguanine:T mispairs for the larger alkyl groups. This Escherichia coli (strain K12) protein is DNA base-flipping protein.